Consider the following 382-residue polypeptide: V-set and immunoglobulin domain-containing protein 1 (382 aa).

Residues 1–21 form the signal peptide; that stretch reads MGLTFWKVFLILNCLAGQVNG. In terms of domain architecture, Ig-like V-type spans 22-133; that stretch reads VQVTIPDSFV…FFGKNQGTIS (112 aa). At 22-234 the chain is on the extracellular side; it reads VQVTIPDSFV…DLTTPYPGIG (213 aa). The N-linked (GlcNAc...) asparagine glycan is linked to N32. Disulfide bonds link C43–C116 and C161–C211. An Ig-like C2-type domain is found at 140–227; it reads PSKPFCSIQG…GNSSCEIDLT (88 aa). Residues N200 and N219 are each glycosylated (N-linked (GlcNAc...) asparagine). A helical transmembrane segment spans residues 235 to 255; it reads IIVGAFVGTLIGVIIIISVVW. At 256 to 382 the chain is on the cytoplasmic side; it reads FVRRKVKAKG…FCDEEKVIKP (127 aa). The segment at 266-382 is disordered; sequence KERKRNSKTT…FCDEEKVIKP (117 aa). Polar residues predominate over residues 273–285; sequence KTTTELEPMTKIN. Basic and acidic residues predominate over residues 286–298; sequence QRTEGETMPREDA. The span at 327 to 341 shows a compositional bias: pro residues; that stretch reads EPEPALQPTVEPPSG.

It is found in the membrane. The protein is V-set and immunoglobulin domain-containing protein 1 (VSIG1) of Bos taurus (Bovine).